The sequence spans 64 residues: MANAAKTITVEQIGSAIRRHHSQRATLIGLNLNKIGRTAELQDTPEVRGMITKVQHLVRIVDEK.

It belongs to the universal ribosomal protein uL30 family. In terms of assembly, part of the 50S ribosomal subunit.

This chain is Large ribosomal subunit protein uL30, found in Rhodopseudomonas palustris (strain BisB18).